The primary structure comprises 265 residues: Short chain dehydrogenase mdpC (265 aa).

The NADP(+) site is built by Ile-25, Asn-98, and Arg-131. Catalysis depends on proton donor residues Ser-147 and Ser-148. Residues Tyr-162, Lys-166, and Thr-197 each coordinate NADP(+). Tyr-162 serves as the catalytic Proton acceptor. Lys-166 acts as the Lowers pKa of active site Tyr in catalysis.

The protein belongs to the short-chain dehydrogenases/reductases (SDR) family.

The catalysed reaction is 3,8,9,10-tetrahydroxy-6-methyl-1,4-dihydroanthracen-1-one + NADPH + H(+) = (3R)-3,8,9,10-tetrahydroxy-6-methyl-1,2,3,4-tetrahydroanthracen-1-one + NADP(+). The protein operates within secondary metabolite biosynthesis. Short chain dehydrogenase; part of the gene cluster that mediates the biosynthesis of monodictyphenone, a prenyl xanthone derivative. The pathway begins with the synthesis of atrochrysone thioester by the polyketide synthase (PKS) mdpG. The atrochrysone carboxyl ACP thioesterase mdpF then breaks the thioester bond and releases the atrochrysone carboxylic acid from mdpG. The atrochrysone carboxylic acid is then converted to atrochrysone which is further transformed into emodin anthrone. The next step is performed by the anthrone oxygenase mdpH that catalyzes the oxidation of emodinanthrone to emodin. Emodin is further modified to yield monodictyphenone via several steps involving mdpB, mdpC mdpJ, mdpK and mdpL. The short chain dehydrogenase mdpC converts the tautomers of emodin hydroquinone into the 3-hydroxy-3,4-dihydroan-thracen-1(2H)-one derivative. These enzymes with xptA, xptB and xptC are also proposed to be involved in the synthesis of shamixanthone from emodin. Especially, direct reduction of emodin by the short chain dehydrogenase mdpC followed by dehydration catalyzed by the scytalone dehydratase-like protein mdpB gives loss of oxygen and formation of chrysophanol intermediate in two simple steps. In Emericella nidulans (strain FGSC A4 / ATCC 38163 / CBS 112.46 / NRRL 194 / M139) (Aspergillus nidulans), this protein is Short chain dehydrogenase mdpC.